The chain runs to 219 residues: Uracil-DNA glycosylase (219 aa).

The Proton acceptor role is filled by Asp59.

It belongs to the uracil-DNA glycosylase (UDG) superfamily. UNG family.

It is found in the cytoplasm. The enzyme catalyses Hydrolyzes single-stranded DNA or mismatched double-stranded DNA and polynucleotides, releasing free uracil.. Functionally, excises uracil residues from the DNA which can arise as a result of misincorporation of dUMP residues by DNA polymerase or due to deamination of cytosine. The protein is Uracil-DNA glycosylase of Macrococcus caseolyticus (strain JCSC5402) (Macrococcoides caseolyticum).